The chain runs to 286 residues: Diaminopimelate epimerase (286 aa).

The substrate site is built by asparagine 13 and asparagine 66. The Proton donor role is filled by cysteine 75. Substrate contacts are provided by residues 76-77, asparagine 165, asparagine 198, and 216-217; these read GN and ER. Catalysis depends on cysteine 225, which acts as the Proton acceptor. 226-227 contacts substrate; that stretch reads GT.

It belongs to the diaminopimelate epimerase family. Homodimer.

It is found in the cytoplasm. The enzyme catalyses (2S,6S)-2,6-diaminopimelate = meso-2,6-diaminopimelate. It participates in amino-acid biosynthesis; L-lysine biosynthesis via DAP pathway; DL-2,6-diaminopimelate from LL-2,6-diaminopimelate: step 1/1. Its function is as follows. Catalyzes the stereoinversion of LL-2,6-diaminopimelate (L,L-DAP) to meso-diaminopimelate (meso-DAP), a precursor of L-lysine and an essential component of the bacterial peptidoglycan. The polypeptide is Diaminopimelate epimerase (Oceanobacillus iheyensis (strain DSM 14371 / CIP 107618 / JCM 11309 / KCTC 3954 / HTE831)).